Consider the following 362-residue polypeptide: MSHSPAQLSASPSSVGDGDRLLRAARGEVVDRPPVWMMRQAGRYMAAYRELQSKYTFKQRCEIPELAIEISLQPFRAFAPDGVIMFSDILTPLEGMGIPFELVEQQGPIIDPPIRSQAQVEQIRLLEPEESLPFIKTILSTLRREVEGKATLLGFVGSPWTLACYAVEGRSSKDYAHIKSLAFTQPQVLHQLLSKLADSIARYVIYQIECGAQVVQLFDTWAGQLSPGDYETWALPYQKQIVDQVKARCPQVPLILYINGSAALLERVGKAGIDVFSLDWMSDMAEARARLGSLAVQGNLDPMVLLGSPKFIRQRTLEVIQKAGSRGHIMNLGHGVHHTTPEANVHHFFETVRQAAELLKAL.

Residues 39–43, D88, Y165, T220, and H334 each bind substrate; that span reads RQAGR.

Belongs to the uroporphyrinogen decarboxylase family. In terms of assembly, homodimer.

It is found in the cytoplasm. It catalyses the reaction uroporphyrinogen III + 4 H(+) = coproporphyrinogen III + 4 CO2. It participates in porphyrin-containing compound metabolism; protoporphyrin-IX biosynthesis; coproporphyrinogen-III from 5-aminolevulinate: step 4/4. Its function is as follows. Catalyzes the decarboxylation of four acetate groups of uroporphyrinogen-III to yield coproporphyrinogen-III. The sequence is that of Uroporphyrinogen decarboxylase from Synechococcus sp. (strain JA-3-3Ab) (Cyanobacteria bacterium Yellowstone A-Prime).